The following is a 375-amino-acid chain: GDP-mannose-dependent alpha-mannosyltransferase (375 aa).

Belongs to the glycosyltransferase group 1 family. Glycosyltransferase 4 subfamily.

The protein operates within phospholipid metabolism; phosphatidylinositol metabolism. Catalyzes the addition of a mannose residue from GDP-D-mannose to GlcAGroAc2 to generate 1,2-di-O-C16/C18:1-(alpha-D-mannopyranosyl)-(1-4)-(alpha-D-glucopyranosyluronic acid)-(1-3)-glycerol(ManGlcAGroAc2). This chain is GDP-mannose-dependent alpha-mannosyltransferase (mgtA), found in Mycolicibacterium smegmatis (strain ATCC 700084 / mc(2)155) (Mycobacterium smegmatis).